Reading from the N-terminus, the 253-residue chain is Sulfoacetaldehyde reductase (253 aa).

6–30 (FITGATSGFGRAAAHRFAAAGWSLV) is an NADP(+) binding site. Ser139 is a binding site for substrate. Tyr152 functions as the Proton acceptor in the catalytic mechanism.

The protein belongs to the short-chain dehydrogenases/reductases (SDR) family. In terms of assembly, homodimer and heterotetramer.

It carries out the reaction 2-hydroxyethane-1-sulfonate + NADP(+) = sulfoacetaldehyde + NADPH + H(+). Its pathway is organosulfur degradation. Functionally, catalyzes the formation of isethionate from 2-sulfoacetaldehyde in the deaminative pathway of taurine. The enzyme is specific for NADPH; NADH is not a substrate. Responsible for most of the activity observed in taurine-grown cells. In Chromohalobacter salexigens (strain ATCC BAA-138 / DSM 3043 / CIP 106854 / NCIMB 13768 / 1H11), this protein is Sulfoacetaldehyde reductase (isfD).